The chain runs to 496 residues: MIDLKQYEFWFLVGSQYLYGLETLKKVEQQASRIVEALNNDPIFPSKIVLKPVLKNSAEIREIFEKANAEPKCAGVIVWMHTFSPSKMWIRGLSINKKPLLHLHTQYNREIPWDTIDMDYMNLNQSAHGDREHGFIHARMRLPRKVVVGHWEDREVREKIAKWMRVACAIQDGRTGQIVRFGDNMREVASTEGDKVEAQIKLGWSINTWGVGELAERVKAVPENEVEELLKEYKERYIMPEDEYSLKAIREQAKMEIALREFLKEKNAIAFTTTFEDLHDLPQLPGLAVQRLMEEGYGFGAEGDWKAAGLVRALKVMGAGLPGGTSFMEDYTYHLTPGNELVLGAHMLEVCPTIAKEKPRIEVHPLSIGGKADPARLVFDGQEGPAVNASIVDMGNRFRLVVNRVLSVPIERKMPKLPTARVLWKPLPDFKRATTAWILAGGSHHTAFSTAVDVEYLIDWAEALEIEYLVIDENLDLENFKKELRWNELYWGLLKR.

Positions 302, 329, 346, and 445 each coordinate Mn(2+).

It belongs to the arabinose isomerase family. The cofactor is Mn(2+).

The catalysed reaction is beta-L-arabinopyranose = L-ribulose. It participates in carbohydrate degradation; L-arabinose degradation via L-ribulose; D-xylulose 5-phosphate from L-arabinose (bacterial route): step 1/3. Functionally, catalyzes the conversion of L-arabinose to L-ribulose. The chain is L-arabinose isomerase from Thermotoga neapolitana (strain ATCC 49049 / DSM 4359 / NBRC 107923 / NS-E).